A 324-amino-acid polypeptide reads, in one-letter code: Appendage-associated protein (324 aa).

A signal peptide spans 1–32 (MGCPVSRGGSPGCGRRIAEELRLAEDARLRLA). Positions 195-255 (IAQAKEIAQA…AADKLQALGK (61 aa)) form a coiled coil.

Its subcellular location is the secreted. Associates with actin filament appendages that are formed in the inclusion appendages of the parasitophorous vacuole during infection of the host erythrocyte. The chain is Appendage-associated protein (aaaP1) from Anaplasma marginale (strain Florida).